The following is a 349-amino-acid chain: Ferredoxin--NADP reductase 1 (349 aa).

Glutamate 36, lysine 44, tyrosine 48, valine 88, leucine 123, aspartate 290, and serine 331 together coordinate FAD.

This sequence belongs to the ferredoxin--NADP reductase type 2 family. As to quaternary structure, homodimer. Requires FAD as cofactor.

It carries out the reaction 2 reduced [2Fe-2S]-[ferredoxin] + NADP(+) + H(+) = 2 oxidized [2Fe-2S]-[ferredoxin] + NADPH. The sequence is that of Ferredoxin--NADP reductase 1 from Bacillus licheniformis (strain ATCC 14580 / DSM 13 / JCM 2505 / CCUG 7422 / NBRC 12200 / NCIMB 9375 / NCTC 10341 / NRRL NRS-1264 / Gibson 46).